Consider the following 390-residue polypeptide: Lipid-A-disaccharide synthase (390 aa).

The protein belongs to the LpxB family.

It catalyses the reaction a lipid X + a UDP-2-N,3-O-bis[(3R)-3-hydroxyacyl]-alpha-D-glucosamine = a lipid A disaccharide + UDP + H(+). It functions in the pathway bacterial outer membrane biogenesis; LPS lipid A biosynthesis. Its function is as follows. Condensation of UDP-2,3-diacylglucosamine and 2,3-diacylglucosamine-1-phosphate to form lipid A disaccharide, a precursor of lipid A, a phosphorylated glycolipid that anchors the lipopolysaccharide to the outer membrane of the cell. This chain is Lipid-A-disaccharide synthase, found in Paramagnetospirillum magneticum (strain ATCC 700264 / AMB-1) (Magnetospirillum magneticum).